A 201-amino-acid polypeptide reads, in one-letter code: Dephospho-CoA kinase (201 aa).

Residues 4-201 (TIGLTGGIAS…ILKQWDALEK (198 aa)) form the DPCK domain. Residue 12-17 (ASGKST) coordinates ATP.

This sequence belongs to the CoaE family.

It localises to the cytoplasm. It catalyses the reaction 3'-dephospho-CoA + ATP = ADP + CoA + H(+). Its pathway is cofactor biosynthesis; coenzyme A biosynthesis; CoA from (R)-pantothenate: step 5/5. Its function is as follows. Catalyzes the phosphorylation of the 3'-hydroxyl group of dephosphocoenzyme A to form coenzyme A. This chain is Dephospho-CoA kinase, found in Geobacillus kaustophilus (strain HTA426).